The following is a 204-amino-acid chain: Sperm acrosome developmental regulator (204 aa).

Residue S65 is modified to Phosphoserine. Over residues 172–184 the composition is skewed to basic residues; it reads RRQERRRRHHLRA. Residues 172-204 form a disordered region; that stretch reads RRQERRRRHHLRAHMGPQPDPAQGLKQDARSPL.

The protein resides in the cytoplasmic vesicle. Its subcellular location is the secretory vesicle. It is found in the acrosome. In terms of biological role, may play an important role in acrosome formation and nucleus shaping during spermiogenesis. The protein is Sperm acrosome developmental regulator (SPACDR) of Bos taurus (Bovine).